The following is a 410-amino-acid chain: Arginine deiminase (410 aa).

The active-site Amidino-cysteine intermediate is the Cys399.

This sequence belongs to the arginine deiminase family.

It is found in the cytoplasm. It catalyses the reaction L-arginine + H2O = L-citrulline + NH4(+). It functions in the pathway amino-acid degradation; L-arginine degradation via ADI pathway; carbamoyl phosphate from L-arginine: step 1/2. This chain is Arginine deiminase, found in Listeria monocytogenes serovar 1/2a (strain ATCC BAA-679 / EGD-e).